The primary structure comprises 496 residues: MDISISWVAIILVISSYFIFMNKWRAAKLPENLPPSPPKLPVIGHLHLLRGGLPQHVLRGITQKYGAVAHLQLGEVYSVVLSSAESTKQAMKVLDPTFADRFDSIGSQIMWYNNNDMIFSRYNDHWRQIRKICVSELLSPKNVRSFGFIRQDEMARLIRVFESSVGVPINASEEISKMSCAIVCRAAFGSVLKDQGLLADLVKEALGMASGFELADLYPSSWLLNLLCFNKYRLRRMRQRLDDILDGFLEEHRVKKSGEFGGEDIIDVLYRMQKDSENKVPITNSGIKGFIFDVFSAGTETSATTIQWALSELMKNPEKLAKAQAEVREKLKGKTNPDVAEVQEIKYLHSVVKETLRLHPPFPLIPRLCKEECEVTGYTIPAKTRILVNVWSIGRDPAYWKDPDTFNPDRFDEVSRDVIGNDFELIPFGAGRRICPGLHFGLANVEVPLAQLLYHFEWKLPQGMTPADMDMSETPGLSGPRKNPLIMVPTIHNPTS.

A helical; Signal-anchor for type II membrane protein transmembrane segment spans residues 1 to 21 (MDISISWVAIILVISSYFIFM). C435 contacts heme. The interval 471–496 (MSETPGLSGPRKNPLIMVPTIHNPTS) is disordered.

It belongs to the cytochrome P450 family. Heme is required as a cofactor. In terms of tissue distribution, expressed at low levels in flowers, leaves and stems.

It localises to the membrane. It catalyses the reaction alpha-terpinene + 2 reduced [NADPH--hemoprotein reductase] + 2 O2 = carvacrol + 2 oxidized [NADPH--hemoprotein reductase] + 3 H2O + 2 H(+). It carries out the reaction gamma-terpinene + 2 reduced [NADPH--hemoprotein reductase] + 2 O2 = carvacrol + 2 oxidized [NADPH--hemoprotein reductase] + 3 H2O + 2 H(+). The catalysed reaction is (4S)-limonene + reduced [NADPH--hemoprotein reductase] + O2 = (1S,5R)-carveol + oxidized [NADPH--hemoprotein reductase] + H2O + H(+). The enzyme catalyses (4R)-limonene + reduced [NADPH--hemoprotein reductase] + O2 = (1R,5S)-carveol + oxidized [NADPH--hemoprotein reductase] + H2O + H(+). It participates in secondary metabolite biosynthesis; terpenoid biosynthesis. Its function is as follows. Involved in the biosynthesis of phenolic monoterpenes natural products thymol and carvacrol which have a broad range of biological activities acting as antimicrobial compounds, insecticides, antioxidants and pharmaceutical agents. Catalyzes the C2-hydroxylation of gamma-terpinene and alpha-terpinene to produce carvacrol. Also mediates the C6-hydroxylation of (4S)-limonene and (4R)-limonene to form carveol. This chain is Cytochrome P450 71D181, found in Origanum vulgare (Wild marjoram).